Reading from the N-terminus, the 312-residue chain is DNA primase small subunit PriS (312 aa).

Residues Asp-88, Asp-90, and Asp-215 contribute to the active site.

This sequence belongs to the eukaryotic-type primase small subunit family. Heterodimer of a small subunit (PriS) and a large subunit (PriL). Requires Mg(2+) as cofactor. Mn(2+) is required as a cofactor.

In terms of biological role, catalytic subunit of DNA primase, an RNA polymerase that catalyzes the synthesis of short RNA molecules used as primers for DNA polymerase during DNA replication. The small subunit contains the primase catalytic core and has DNA synthesis activity on its own. Binding to the large subunit stabilizes and modulates the activity, increasing the rate of DNA synthesis while decreasing the length of the DNA fragments, and conferring RNA synthesis capability. The DNA polymerase activity may enable DNA primase to also catalyze primer extension after primer synthesis. May also play a role in DNA repair. This Pyrobaculum calidifontis (strain DSM 21063 / JCM 11548 / VA1) protein is DNA primase small subunit PriS.